The chain runs to 174 residues: Urease accessory protein UreE (174 aa).

The segment at 146 to 174 is disordered; sequence NGAYATGGHAHDHDGEPEHVHGPGCQHAH. Positions 154 to 166 are enriched in basic and acidic residues; that stretch reads HAHDHDGEPEHVH.

It belongs to the UreE family.

The protein resides in the cytoplasm. Its function is as follows. Involved in urease metallocenter assembly. Binds nickel. Probably functions as a nickel donor during metallocenter assembly. In Albidiferax ferrireducens (strain ATCC BAA-621 / DSM 15236 / T118) (Rhodoferax ferrireducens), this protein is Urease accessory protein UreE.